The primary structure comprises 125 residues: Secreted RxLR effector protein RXLR-C13 (125 aa).

Residues 1–23 (MVNSLTFTLVVVCLVRSCDGVAA) form the signal peptide. Residues 43-73 (RVLQETATANDDVKKLSTSTKVDSKLNQEIK) carry the RxLR-dEER motif. N-linked (GlcNAc...) asparagine glycosylation is present at asparagine 85. The helical transmembrane segment at 106–123 (FFILATILLFPIAAYMVA) threads the bilayer.

Belongs to the RxLR effector family.

The protein resides in the secreted. It is found in the host endoplasmic reticulum membrane. Secreted effector that does not suppress pattern-triggered immunity (PTI) in plant host. The sequence is that of Secreted RxLR effector protein RXLR-C13 from Plasmopara halstedii (Downy mildew of sunflower).